Reading from the N-terminus, the 154-residue chain is Lipoprotein signal peptidase (154 aa).

Helical transmembrane passes span 8-28 (LYLIVSLLVIIADQLLKNYIV), 58-78 (IFSGQMILFYLISIAAIAVVI), and 88-108 (NGLFDTGLALVLGGIIGNFID). Residues Asp117 and Asp133 contribute to the active site. Residues 131-151 (IADSAITVGIILVFIYLIFIS) traverse the membrane as a helical segment.

Belongs to the peptidase A8 family.

It is found in the cell membrane. The enzyme catalyses Release of signal peptides from bacterial membrane prolipoproteins. Hydrolyzes -Xaa-Yaa-Zaa-|-(S,diacylglyceryl)Cys-, in which Xaa is hydrophobic (preferably Leu), and Yaa (Ala or Ser) and Zaa (Gly or Ala) have small, neutral side chains.. It functions in the pathway protein modification; lipoprotein biosynthesis (signal peptide cleavage). Functionally, this protein specifically catalyzes the removal of signal peptides from prolipoproteins. The polypeptide is Lipoprotein signal peptidase (Lactobacillus johnsonii (strain CNCM I-12250 / La1 / NCC 533)).